The following is a 264-amino-acid chain: Protein Saci_1508 (264 aa).

This sequence belongs to the CinA family.

In Sulfolobus acidocaldarius (strain ATCC 33909 / DSM 639 / JCM 8929 / NBRC 15157 / NCIMB 11770), this protein is Protein Saci_1508.